The sequence spans 877 residues: Probable linoleate 9S-lipoxygenase 4 (877 aa).

Residues 38–165 (GDFHASLLDG…NYQYERVFFA (128 aa)) form the PLAT domain. Positions 168 to 877 (TYLPSKMPAP…AMGIPNSISI (710 aa)) constitute a Lipoxygenase domain. The interval 229–252 (GSQELPYPRRGRTGRAPTKTDPNT) is disordered. His528, His533, His719, Asn723, and Ile877 together coordinate Fe cation.

This sequence belongs to the lipoxygenase family. It depends on Fe cation as a cofactor.

It catalyses the reaction (9Z,12Z)-octadecadienoate + O2 = (9S)-hydroperoxy-(10E,12Z)-octadecadienoate. It functions in the pathway lipid metabolism; oxylipin biosynthesis. Its function is as follows. Plant lipoxygenase may be involved in a number of diverse aspects of plant physiology including growth and development, pest resistance, and senescence or responses to wounding. Catalyzes the hydroperoxidation of lipids containing a cis,cis-1,4-pentadiene structure. The sequence is that of Probable linoleate 9S-lipoxygenase 4 from Oryza sativa subsp. japonica (Rice).